Here is a 557-residue protein sequence, read N- to C-terminus: Glutamine--tRNA ligase (557 aa).

Residues 42-52 carry the 'HIGH' region motif; that stretch reads PEPNGYLHIGH. ATP is bound by residues 43–45 and 49–55; these read EPN and HIGHAKS. Residues Asp75 and Tyr220 each contribute to the L-glutamine site. ATP contacts are provided by residues Thr239 and 270-271; that span reads RL. The 'KMSKS' region motif lies at 277-281; it reads LTSKR.

The protein belongs to the class-I aminoacyl-tRNA synthetase family. As to quaternary structure, monomer.

It localises to the cytoplasm. The catalysed reaction is tRNA(Gln) + L-glutamine + ATP = L-glutaminyl-tRNA(Gln) + AMP + diphosphate. In Haemophilus influenzae (strain ATCC 51907 / DSM 11121 / KW20 / Rd), this protein is Glutamine--tRNA ligase.